We begin with the raw amino-acid sequence, 38 residues long: Defensin D7 (38 aa).

Belongs to the DEFL family. Group IV subfamily. Distributed in the epidermal cell layer of leaves and in the subepidermal layer region of stems. Not in roots.

The protein resides in the secreted. Its subcellular location is the cell wall. Its function is as follows. Antimicrobial peptide. Active against Fusarium spp., Gram-positive and Gram-negative bacterial pathogens. This chain is Defensin D7, found in Spinacia oleracea (Spinach).